Consider the following 160-residue polypeptide: Small ribosomal subunit protein uS7B (160 aa).

It belongs to the universal ribosomal protein uS7 family. As to quaternary structure, part of the 30S ribosomal subunit. Contacts proteins S9 and S11.

Functionally, one of the primary rRNA binding proteins, it binds directly to 16S rRNA where it nucleates assembly of the head domain of the 30S subunit. Is located at the subunit interface close to the decoding center, probably blocks exit of the E-site tRNA. The polypeptide is Small ribosomal subunit protein uS7B (Aquifex aeolicus (strain VF5)).